Consider the following 458-residue polypeptide: Exodeoxyribonuclease 7 large subunit (458 aa).

The protein belongs to the XseA family. As to quaternary structure, heterooligomer composed of large and small subunits.

Its subcellular location is the cytoplasm. It carries out the reaction Exonucleolytic cleavage in either 5'- to 3'- or 3'- to 5'-direction to yield nucleoside 5'-phosphates.. In terms of biological role, bidirectionally degrades single-stranded DNA into large acid-insoluble oligonucleotides, which are then degraded further into small acid-soluble oligonucleotides. The sequence is that of Exodeoxyribonuclease 7 large subunit from Escherichia coli O6:H1 (strain CFT073 / ATCC 700928 / UPEC).